A 628-amino-acid chain; its full sequence is Dihydroxy-acid dehydratase (628 aa).

Asp80 lines the Mg(2+) pocket. A [2Fe-2S] cluster-binding site is contributed by Cys121. Residues Asp122 and Lys123 each contribute to the Mg(2+) site. An N6-carboxylysine modification is found at Lys123. Cys207 serves as a coordination point for [2Fe-2S] cluster. Residue Glu503 coordinates Mg(2+). Ser529 acts as the Proton acceptor in catalysis.

It belongs to the IlvD/Edd family. Homodimer. [2Fe-2S] cluster is required as a cofactor. It depends on Mg(2+) as a cofactor.

The enzyme catalyses (2R)-2,3-dihydroxy-3-methylbutanoate = 3-methyl-2-oxobutanoate + H2O. It carries out the reaction (2R,3R)-2,3-dihydroxy-3-methylpentanoate = (S)-3-methyl-2-oxopentanoate + H2O. It functions in the pathway amino-acid biosynthesis; L-isoleucine biosynthesis; L-isoleucine from 2-oxobutanoate: step 3/4. Its pathway is amino-acid biosynthesis; L-valine biosynthesis; L-valine from pyruvate: step 3/4. In terms of biological role, functions in the biosynthesis of branched-chain amino acids. Catalyzes the dehydration of (2R,3R)-2,3-dihydroxy-3-methylpentanoate (2,3-dihydroxy-3-methylvalerate) into 2-oxo-3-methylpentanoate (2-oxo-3-methylvalerate) and of (2R)-2,3-dihydroxy-3-methylbutanoate (2,3-dihydroxyisovalerate) into 2-oxo-3-methylbutanoate (2-oxoisovalerate), the penultimate precursor to L-isoleucine and L-valine, respectively. In Psychrobacter arcticus (strain DSM 17307 / VKM B-2377 / 273-4), this protein is Dihydroxy-acid dehydratase.